The chain runs to 210 residues: Large ribosomal subunit protein bL17 (210 aa).

Residues 177-210 (TRSAQRPAFEQDAPESDSAPEAEAKTEEETASAN) form a disordered region.

The protein belongs to the bacterial ribosomal protein bL17 family. Part of the 50S ribosomal subunit. Contacts protein L32.

The sequence is that of Large ribosomal subunit protein bL17 from Rhodopirellula baltica (strain DSM 10527 / NCIMB 13988 / SH1).